The following is a 666-amino-acid chain: L-aspartate N-monooxygenase (nitrosuccinate-forming) (666 aa).

The interval 645-666 (LPAYEDPGVRCPSDDRLTEVTA) is disordered. Positions 656–666 (PSDDRLTEVTA) are enriched in basic and acidic residues.

The protein belongs to the nitrosuccinic acid synthase family. It depends on FAD as a cofactor.

The enzyme catalyses L-aspartate + 3 NADPH + 3 O2 + 2 H(+) = 2-nitrobutanedioate + 3 NADP(+) + 4 H2O. Its pathway is antibiotic biosynthesis. Functionally, part of a gene cluster involved in the biosynthesis of cremeomycin, a light-sensitive o-diazoquinone with antibacterial and antiproliferative effects. Catalyzes the iterative oxidation of L-aspartic acid to nitrosuccinic acid (2-nitrobutanedioate) via N-hydroxyaspartic acid and nitrososuccinic acid. The sequence is that of L-aspartate N-monooxygenase (nitrosuccinate-forming) from Streptomyces cremeus.